Here is a 135-residue protein sequence, read N- to C-terminus: Flagellar assembly factor FliW 1 (135 aa).

The protein belongs to the FliW family. As to quaternary structure, interacts with translational regulator CsrA and flagellin(s).

It localises to the cytoplasm. In terms of biological role, acts as an anti-CsrA protein, binds CsrA and prevents it from repressing translation of its target genes, one of which is flagellin. Binds to flagellin and participates in the assembly of the flagellum. The protein is Flagellar assembly factor FliW 1 of Helicobacter pylori (strain HPAG1).